The primary structure comprises 521 residues: Protein TESPA1 (521 aa).

Position 311 is a phosphoserine (serine 311). Over residues glutamine 331–glutamine 341 the composition is skewed to polar residues. Disordered regions lie at residues glutamine 331–lysine 351 and glutamine 461–serine 521. Over residues glutamine 466 to arginine 475 the composition is skewed to basic and acidic residues. Acidic residues predominate over residues phenylalanine 485–glutamine 498. Positions serine 505–glutamine 514 are enriched in basic residues.

Interacts with PLCG1 and GRB2; the association is increased with prolonged stimulation of the TCR and may facilitate the assembly of the LAT signalosome. Interacts with ITPR1. Also interacts with ITPR3. Interacts with HSPA9. Post-translationally, may be phosphorylated in response to store-operated Ca(+2) entry.

It localises to the cytoplasm. Its subcellular location is the endoplasmic reticulum membrane. Required for the development and maturation of T-cells, its function being essential for the late stages of thymocyte development. Plays a role in T-cell antigen receptor (TCR)-mediated activation of the ERK and NFAT signaling pathways, possibly by serving as a scaffolding protein that promotes the assembly of the LAT signalosome in thymocytes. May play a role in the regulation of inositol 1,4,5-trisphosphate receptor-mediated Ca(2+) release and mitochondrial Ca(2+) uptake via the mitochondria-associated endoplasmic reticulum membrane (MAM) compartment. In Homo sapiens (Human), this protein is Protein TESPA1 (TESPA1).